We begin with the raw amino-acid sequence, 448 residues long: Maintenance of mitochondrial morphology protein 1 (448 aa).

Topologically, residues 1–74 are lumenal; sequence MTESVIYSGT…LNHTWSFTQG (74 aa). Residues 75-95 traverse the membrane as a helical segment; the sequence is LVVGQLSVIVVVAIFIKFFVF. Topologically, residues 96-448 are cytoplasmic; sequence ADSSATTTTT…IVDKTEEASI (353 aa). Disordered stretches follow at residues 119-144 and 303-357; these read RNKN…LNSP and LQNV…SQED. The span at 127–140 shows a compositional bias: basic and acidic residues; that stretch reads SNEDKDPNNNKEDD. The 256-residue stretch at 164–419 folds into the SMP-LTD domain; that stretch reads SPESLDWFNV…EPRFQVVKVP (256 aa). Residues 313-332 show a composition bias toward low complexity; the sequence is PSNEPNSQNQTQQPTPVNNS. Residues 345 to 356 show a composition bias toward basic and acidic residues; that stretch reads ETKHSKAKRSQE.

This sequence belongs to the MMM1 family. In terms of assembly, homodimer. Component of the ER-mitochondria encounter structure (ERMES) or MDM complex, composed of MMM1, MDM10, MDM12 and MDM34. An MMM1 homodimer associates with one molecule of MDM12 on each side in a pairwise head-to-tail manner, and the SMP-LTD domains of MMM1 and MDM12 generate a continuous hydrophobic tunnel for phospholipid trafficking.

It localises to the endoplasmic reticulum membrane. Functionally, component of the ERMES/MDM complex, which serves as a molecular tether to connect the endoplasmic reticulum (ER) and mitochondria. Components of this complex are involved in the control of mitochondrial shape and protein biogenesis, and function in nonvesicular lipid trafficking between the ER and mitochondria. The MDM12-MMM1 subcomplex functions in the major beta-barrel assembly pathway that is responsible for biogenesis of all outer membrane beta-barrel proteins, and acts in a late step after the SAM complex. The MDM10-MDM12-MMM1 subcomplex further acts in the TOM40-specific pathway after the action of the MDM12-MMM1 complex. Essential for establishing and maintaining the structure of mitochondria and maintenance of mtDNA nucleoids. This is Maintenance of mitochondrial morphology protein 1 from Debaryomyces hansenii (strain ATCC 36239 / CBS 767 / BCRC 21394 / JCM 1990 / NBRC 0083 / IGC 2968) (Yeast).